The following is a 186-amino-acid chain: MNVKDVSQKSEQKMKKAIEAFQHEIASIRTGKATTALLDRVKVEAYGQTMPLRQVGNVGVSDIHTLLVQVWDKSMVAATEKAIRDANLGLNPAAEGQSIRVSIPPLTEERRKEFVKLTRKFGEDSKVSLRNHRRDMIQEIEKLEKEKAISEDDRNRGKKDADDLLHRFEKQVNELIAQKEKEIMEV.

Belongs to the RRF family.

It localises to the cytoplasm. Functionally, responsible for the release of ribosomes from messenger RNA at the termination of protein biosynthesis. May increase the efficiency of translation by recycling ribosomes from one round of translation to another. The chain is Ribosome-recycling factor from Chlorobium luteolum (strain DSM 273 / BCRC 81028 / 2530) (Pelodictyon luteolum).